The following is a 209-amino-acid chain: Probable peptide export ATP-binding protein YydI (209 aa).

In terms of domain architecture, ABC transporter spans 1–207 (MNIANYTLKV…SVDKLIEVYI (207 aa)). 33–40 (GKNGVGKS) contacts ATP.

This sequence belongs to the ABC transporter superfamily. The complex is composed of two ATP-binding proteins (YydI), two transmembrane proteins (YydJ).

Its function is as follows. Suggested to be part of an ABC transporter complex YydIJ involved in export of the modified peptide YydF. Responsible for energy coupling to the transport system. This is Probable peptide export ATP-binding protein YydI (yydI) from Bacillus subtilis (strain 168).